A 565-amino-acid polypeptide reads, in one-letter code: Arginine--tRNA ligase (565 aa).

A 'HIGH' region motif is present at residues 126–136 (ANPTGPLHIGH).

It belongs to the class-I aminoacyl-tRNA synthetase family. In terms of assembly, monomer.

Its subcellular location is the cytoplasm. It carries out the reaction tRNA(Arg) + L-arginine + ATP = L-arginyl-tRNA(Arg) + AMP + diphosphate. The protein is Arginine--tRNA ligase of Wolbachia sp. subsp. Brugia malayi (strain TRS).